The primary structure comprises 765 residues: Zinc transporter ZIP6 (765 aa).

The N-terminal stretch at 1–20 (MATDLSVIMILTFALWVTSP) is a signal peptide. The Extracellular portion of the chain corresponds to 21-335 (LHELQSTAAF…PKTYSLQIAW (315 aa)). N68 carries N-linked (GlcNAc...) asparagine glycosylation. Composition is skewed to basic and acidic residues over residues 96–135 (DHEH…DHEH) and 174–186 (RPAE…RNIK). 2 disordered regions span residues 96–196 (DHEH…EVTS) and 209–257 (VETI…SEPR). Residues 187–196 (ESASSSEVTS) are compositionally biased toward low complexity. A compositionally biased stretch (polar residues) spans 224 to 233 (VNPSTPPSIT). Residues 238–247 (VGRLSRLARK) are compositionally biased toward basic residues. Over residues 248 to 257 (KSNESVSEPR) the composition is skewed to basic and acidic residues. N250, N275, and N292 each carry an N-linked (GlcNAc...) asparagine glycan. The helical transmembrane segment at 336-356 (LGGFIAISIISFLSLLGVILV) threads the bilayer. At 357-365 (PLMNRVFFK) the chain is on the cytoplasmic side. The helical transmembrane segment at 366–386 (FLLSFLVALAVGTLSGDALLH) threads the bilayer. Topologically, residues 387-433 (LLPHSHASHQHSHSHEEPAMEMKRGPLFSHLSAQNIEESSYFDSTWK) are extracellular. The chain crosses the membrane as a helical span at residues 434–454 (GLTALGGLYFMFLVEHVLTLI). Topologically, residues 455–667 (KQFKDKKKKN…LKAGMTVKQA (213 aa)) are cytoplasmic. The tract at residues 458–519 (KDKKKKNQKK…EPSPFDSQQP (62 aa)) is disordered. Residues 475–495 (ESKKQLSKYDSQLSSNEEKVD) are a coiled coil. Residues S481 and S488 each carry the phosphoserine modification. A compositionally biased stretch (basic and acidic residues) spans 490–508 (NEEKVDPGERPESYLRADS). The span at 509-519 (QEPSPFDSQQP) shows a compositional bias: polar residues. A helical membrane pass occupies residues 668-688 (VLYNALSAMLAYLGMATGIFI). Over 689 to 696 (GHYAENVS) the chain is Extracellular. N-linked (GlcNAc...) asparagine glycosylation occurs at N694. The helical transmembrane segment at 697 to 717 (MWIFALTAGLFMYVALVDMVP) threads the bilayer. Residues 718–734 (EMLHNDASDHGCSRWGY) lie on the Cytoplasmic side of the membrane. The chain crosses the membrane as a helical span at residues 735–755 (FFLQNAGILLGFGIMLLISIF). Residues 756 to 765 (EHKIVFRINF) are Extracellular-facing.

It belongs to the ZIP transporter (TC 2.A.5) family. In terms of assembly, interacts with SLC39A10; which triggers cells to undergo EMT and mitosis. Found in a complex with SLC39A6, SLC39A10 and with the 'Ser-727' phosphorylated form of STAT3 throughout mitosis. Found in a complex with SLC39A6, SLC39A10 and with NCAM1; this complex controls NCAM1 phosphorylation and integration into focal adhesion complexes during epithelial-to-mesenchymal transition (EMT). Found in a complex with SLC39A6, SLC39A10 and with GSK3B that controls NCAM1 phosphorylation. Cleaved on the N-terminus before locating to the plasma membrane. Post-translationally, N-glycosylated. In terms of processing, phosphorylated by ZAP70 in response to TCR stimulation leading to its activation. As to expression, highly expressed in the brain and testis. In the brain strongly expressed in the CA1 and CA3 regions, Purkinje cells in cerebellum and dentate gyrus in hippocampus. In testis found in spermatids or mature sperms in the central areas of seminiferous tubules.

Its subcellular location is the cell membrane. It localises to the cell projection. The protein resides in the lamellipodium membrane. The protein localises to the membrane raft. It is found in the apical cell membrane. It catalyses the reaction Zn(2+)(in) = Zn(2+)(out). Zinc-influx transporter which plays a role in zinc homeostasis and in the induction of epithelial-to-mesenchymal transition (EMT). When associated with SLC39A10, the heterodimer formed by SLC39A10 and SLC39A6 mediates cellular zinc uptake to trigger cells to undergo epithelial- to-mesenchymal transition (EMT). The SLC39A10-SLC39A6 heterodimer also controls NCAM1 phosphorylation and its integration into focal adhesion complexes during EMT. Zinc influx inactivates GSK3B, enabling unphosphorylated SNAI1 in the nucleus to down-regulate adherence genes such as E-cadherin, causing loss of cell adherence. In addition, the SLC39A10-SLC39A6 heterodimer plays an essentiel role in initiating mitosis by importing zinc into cells to initiate a pathway resulting in the onset of mitosis. Participates in the T-cell receptor signaling regulation by mediating cellular zinc uptake into activated lymphocytes. Regulates the zinc influx necessary for proper meiotic progression to metaphase II (MII) that allows the oocyte-to-egg transition. The protein is Zinc transporter ZIP6 of Mus musculus (Mouse).